A 221-amino-acid polypeptide reads, in one-letter code: uncharacterized protein (221 aa).

This is an uncharacterized protein from Archaeoglobus fulgidus (strain ATCC 49558 / DSM 4304 / JCM 9628 / NBRC 100126 / VC-16).